The sequence spans 733 residues: Folic acid synthesis protein fol1 (733 aa).

2 DHNA regions span residues 55–167 and 179–277; these read VVVE…YAER and IEFS…QIYR. A Phosphotyrosine modification is found at Tyr281. The HPK stretch occupies residues 295–454; it reads NKIAYLSFGS…LPSQGIRLYS (160 aa). Positions 465–724 constitute a Pterin-binding domain; sequence ALTMGILNVT…DTKEMSKVVG (260 aa). The DHPS stretch occupies residues 467-733; that stretch reads TMGILNVTPD…GMANAIRYVP (267 aa). A Mg(2+)-binding site is contributed by Asn472. (7,8-dihydropterin-6-yl)methyl diphosphate-binding positions include Thr511, Asp546, Asn565, Asp637, Lys677, and 712-714; that span reads RVH.

It in the N-terminal section; belongs to the DHNA family. In the central section; belongs to the HPPK family. This sequence in the C-terminal section; belongs to the DHPS family. It depends on Mg(2+) as a cofactor.

Its subcellular location is the cytoplasm. The catalysed reaction is 7,8-dihydroneopterin = 6-hydroxymethyl-7,8-dihydropterin + glycolaldehyde. It carries out the reaction 6-hydroxymethyl-7,8-dihydropterin + ATP = (7,8-dihydropterin-6-yl)methyl diphosphate + AMP + H(+). It catalyses the reaction (7,8-dihydropterin-6-yl)methyl diphosphate + 4-aminobenzoate = 7,8-dihydropteroate + diphosphate. The protein operates within cofactor biosynthesis; tetrahydrofolate biosynthesis; 2-amino-4-hydroxy-6-hydroxymethyl-7,8-dihydropteridine diphosphate from 7,8-dihydroneopterin triphosphate: step 3/4. It participates in cofactor biosynthesis; tetrahydrofolate biosynthesis; 2-amino-4-hydroxy-6-hydroxymethyl-7,8-dihydropteridine diphosphate from 7,8-dihydroneopterin triphosphate: step 4/4. Its pathway is cofactor biosynthesis; tetrahydrofolate biosynthesis; 7,8-dihydrofolate from 2-amino-4-hydroxy-6-hydroxymethyl-7,8-dihydropteridine diphosphate and 4-aminobenzoate: step 1/2. Functionally, catalyzes three sequential steps of tetrahydrofolate biosynthesis. The chain is Folic acid synthesis protein fol1 (fol1) from Schizosaccharomyces pombe (strain 972 / ATCC 24843) (Fission yeast).